A 477-amino-acid polypeptide reads, in one-letter code: Histone-lysine N-methyltransferase SUV39H2 (477 aa).

Residues 1-59 are disordered; the sequence is MATARAKARGSEAGARCHRAPGPPPRPKARRTARRRRAETLTARRSRPSAGERRAGSQR. Residues 27-37 are compositionally biased toward basic residues; the sequence is PKARRTARRRR. The Chromo domain maps to 118–176; it reads YEVEYLCDYKVAKGVEYYLVKWKGWPDSTNTWEPLRNLRCPQLLRQFSDDKKTYLAQER. A Pre-SET domain is found at 256–314; sequence FGCSCTDCFFDKCCPAEAGVVLAYNKKQQIKIQPGTPIYECNSRCRCGPECPNRIVQKG. Zn(2+) is bound by residues Cys258, Cys260, Cys263, Cys268, Cys269, Cys296, Cys300, Cys302, and Cys306. Residues 317 to 440 form the SET domain; it reads YSLCIFKTSN…AGEELTFDYQ (124 aa). Residues 328-330, Tyr371, and 397-398 contribute to the S-adenosyl-L-methionine site; these read CGW and NH. Cys400 is a binding site for Zn(2+). 3 positions are modified to phosphoserine: Ser448, Ser451, and Ser455. Residues 461–477 enclose the Post-SET domain; the sequence is VRTQCKCGAETCRGYLN. Zn(2+) contacts are provided by Cys465, Cys467, and Cys472.

Belongs to the class V-like SAM-binding methyltransferase superfamily. Histone-lysine methyltransferase family. Suvar3-9 subfamily. Interacts with SMAD5. The large PER complex involved in the histone methylation is composed of at least PER2, CBX3, TRIM28, SUV39H1 and/or SUV39H2; CBX3 mediates the formation of the complex. In terms of processing, ubiquitinated by the DCX(DCAF13) E3 ubiquitin ligase complex, leading to its degradation. As to expression, testis specific; predominant expression in type B spermatogonia and preleptotene spermatocytes.

The protein localises to the nucleus. Its subcellular location is the chromosome. It is found in the centromere. The enzyme catalyses L-lysyl(9)-[histone H3] + 3 S-adenosyl-L-methionine = N(6),N(6),N(6)-trimethyl-L-lysyl(9)-[histone H3] + 3 S-adenosyl-L-homocysteine + 3 H(+). In terms of biological role, histone methyltransferase that specifically trimethylates 'Lys-9' of histone H3 using monomethylated H3 'Lys-9' as substrate. H3 'Lys-9' trimethylation represents a specific tag for epigenetic transcriptional repression by recruiting HP1 (CBX1, CBX3 and/or CBX5) proteins to methylated histones. Mainly functions in heterochromatin regions, thereby playing a central role in the establishment of constitutive heterochromatin at pericentric and telomere regions. H3 'Lys-9' trimethylation is also required to direct DNA methylation at pericentric repeats. SUV39H1 is targeted to histone H3 via its interaction with RB1 and is involved in many processes, such as cell cycle regulation, transcriptional repression and regulation of telomere length. May participate in regulation of higher-order chromatin organization during spermatogenesis. Recruited by the large PER complex to the E-box elements of the circadian target genes such as PER2 itself or PER1, contributes to the conversion of local chromatin to a heterochromatin-like repressive state through H3 'Lys-9' trimethylation. This is Histone-lysine N-methyltransferase SUV39H2 (Suv39h2) from Mus musculus (Mouse).